Here is a 274-residue protein sequence, read N- to C-terminus: tRNA-cytidine(32) 2-sulfurtransferase (274 aa).

Positions 40–45 (SGGKDS) match the PP-loop motif motif. [4Fe-4S] cluster contacts are provided by Cys-115, Cys-118, and Cys-206.

Belongs to the TtcA family. As to quaternary structure, homodimer. Requires Mg(2+) as cofactor. [4Fe-4S] cluster is required as a cofactor.

It is found in the cytoplasm. The enzyme catalyses cytidine(32) in tRNA + S-sulfanyl-L-cysteinyl-[cysteine desulfurase] + AH2 + ATP = 2-thiocytidine(32) in tRNA + L-cysteinyl-[cysteine desulfurase] + A + AMP + diphosphate + H(+). It participates in tRNA modification. Catalyzes the ATP-dependent 2-thiolation of cytidine in position 32 of tRNA, to form 2-thiocytidine (s(2)C32). The sulfur atoms are provided by the cysteine/cysteine desulfurase (IscS) system. The sequence is that of tRNA-cytidine(32) 2-sulfurtransferase from Pseudomonas fluorescens (strain SBW25).